Here is a 318-residue protein sequence, read N- to C-terminus: N-acyl-aromatic-L-amino acid amidohydrolase (carboxylate-forming) (318 aa).

Positions 1 to 210 (MSSLPGSREP…ILDFIELFNQ (210 aa)) are hydrolytic domain. Residues His-21 and Glu-24 each coordinate Zn(2+). Residues Arg-63 and 70-71 (NR) each bind substrate. A Zn(2+)-binding site is contributed by His-116. Substrate-binding residues include Glu-177 and Tyr-287. The shielding domain stretch occupies residues 211–318 (GMDLPAFEMD…RLTPRSTQTP (108 aa)). Thr-317 is modified (phosphothreonine).

This sequence belongs to the AspA/AstE family. Aspartoacylase subfamily. In terms of assembly, exists as a mixture of homodimers and homotetramer, both catalytically active. Zn(2+) is required as a cofactor. Expressed predominantly in kidney and to a lesser extent in liver. Weakly expressed in heart, small intestine, brain, lung, testis, and stomach.

The protein resides in the apical cell membrane. Its subcellular location is the cytoplasm. The catalysed reaction is an N-acyl-aromatic L-alpha-amino acid + H2O = an aromatic L-alpha-amino acid + a carboxylate. It carries out the reaction an N-acetyl-L-cysteine-S-conjugate + H2O = an S-substituted L-cysteine + acetate. Its function is as follows. Plays an important role in deacetylating mercapturic acids in kidney proximal tubules. Also acts on N-acetyl-aromatic amino acids. The sequence is that of N-acyl-aromatic-L-amino acid amidohydrolase (carboxylate-forming) (Acy3) from Mus musculus (Mouse).